Consider the following 527-residue polypeptide: MASISTTTWLYRGQVCTDSGKSSNCIVQRRVKCGFPLKTLHAGITSRDRSLRHCIKCKKEDGDGDVSEGSKKSEEGFEYVTVERHPYHSYMDSTSGKLEPASGARASIPGEDYWPEGTSSRVRAARAPQPAGESSSFPSYGKNPGSRRKKNRKATEENVTVETNDEVSDSEDSSEEEENDSSDGFVTYKNEFEREEEETGFELDKKLGRPHPFIDPTKKKQIEKTLTSDESWWNWRKPEKEQWSRWQRRRPDVETVFLKAMAETGQVKLYGEEPTLTETSLYRARRHLFKEERLQAERERLAKEGPMAFYSEWVKAWKRDTSREAVQKHFEETGEDENTQLIEMFSHQTDREYRIMMGTDIRIKRDPLAMRMREDQIKQIWGGDPVYPTINYIQDPNAVMDFRGPDFHEPTPNMLSYLKENGKVISREMHEALLTKEKTEQLEVPDMDDAMAQAVDIGENDDDEDDADVEKDDEKVPRNWSVLKETPELRTAKPKPKKEGRMSLDEAVDDAENLTDFLMDFEEETDP.

The transit peptide at 1–30 directs the protein to the chloroplast; that stretch reads MASISTTTWLYRGQVCTDSGKSSNCIVQRR. Residues 1–115 form a PHYA-interacting region 1 (PIR1) region; it reads MASISTTTWL…ASIPGEDYWP (115 aa). The disordered stretch occupies residues 89–188; it reads SYMDSTSGKL…NDSSDGFVTY (100 aa). Over residues 163–181 the composition is skewed to acidic residues; that stretch reads TNDEVSDSEDSSEEEENDS. 2 consecutive short sequence motifs (nuclear localization signal) follow at residues 204–211 and 235–242; these read DKKLGRPH and WRKPEKEQ. A PHYA-interacting region 2 (PIR2) region spans residues 252–352; the sequence is DVETVFLKAM…EMFSHQTDRE (101 aa). Residues 458–471 show a composition bias toward acidic residues; that stretch reads GENDDDEDDADVEK. The interval 458–527 is disordered; that stretch reads GENDDDEDDA…LMDFEEETDP (70 aa). Basic and acidic residues predominate over residues 485–504; that stretch reads ETPELRTAKPKPKKEGRMSL. Acidic residues predominate over residues 506–527; it reads EAVDDAENLTDFLMDFEEETDP. The Required and sufficient for transcriptional transactivation activity and to trigger PIF proteins degradation signature appears at 512–520; sequence ENLTDFLMD.

In terms of assembly, component of the transcriptionally active chromosome (TAC) complexes. Interacts with PTAC14 and PTAC7. Binds directly to PTAC6/PAP8 in the nucleus. Interacts with MED14. Binds to SL1/MTERF3. Binds to photoactivated phytochromes (e.g. PHYA and PHYB) via their photosensory domains; these interactions stimulate its light-mediated accumulation. Associates, via its N-terminal region, with phytochrome-interacting factors (PIFs) including PIF1, PIF3, PIF4, PIF5, PIF6, BHLH72/PIF7, UNE10/PIF8 and PIL1. Binds to RAD4. Associates with MRL7/RCB. As to expression, mostly expressed in cotyledons, leaves, stems and flowers, but barely in roots.

The protein resides in the plastid. The protein localises to the chloroplast. It is found in the nucleus. Involved in plastid gene expression. Acidic transcriptional coactivator necessary for the transactivation of many PIFs target genes (class B genes), particularly during the regulation of hypocotyl growth. Plays dual opposite roles in regulating hypocotyl growth, preventing it in red and far-red conditions, but promoting it otherwise. Required in the nucleus for the initiation of photomorphogenesis mediated by phytochromes (PHYs) (e.g. PHYA and PHYB) by mediating PHYs localization to photobodies, especially in response to red and far-red light, and implicating phytochrome nuclear bodies as sites of proteolysis for PHYs and PIFs proteins (e.g. PIF1 and PIF3). Acts downstream of PHYs and upstream of DET1. Involved in UV tolerance in both roots and hypocotyls, specifically in dark conditions. Element of a PIF4/HMR/MED14-dependent thermoresponsive process; acts as a PIF4 transcriptional coactivator to trigger the thermoresponsive growth-relevant genes (e.g. mainly involved in biosynthesis and signaling of the phytohormone auxin) and promote warm-temperature-dependent (e.g. 27 degrees Celsius) PIF4 and MED14 stabilization and accumulation, being more prominently involved in long days (LD) and continuous red light (Rc) than in short days (SD), thus modulating warm temperature elicitation of MED14-dependent thermomorphogenesis (e.g. hypocotyl elongation). This chain is Protein PLASTID TRANSCRIPTIONALLY ACTIVE 12, chloroplastic, found in Arabidopsis thaliana (Mouse-ear cress).